We begin with the raw amino-acid sequence, 149 residues long: Nucleoside diphosphate kinase (149 aa).

Lys9, Phe57, Arg85, Thr91, Arg102, and Asn112 together coordinate ATP. His115 (pros-phosphohistidine intermediate) is an active-site residue.

The protein belongs to the NDK family. Homotetramer. It depends on Mg(2+) as a cofactor.

It is found in the cytoplasm. It carries out the reaction a 2'-deoxyribonucleoside 5'-diphosphate + ATP = a 2'-deoxyribonucleoside 5'-triphosphate + ADP. The enzyme catalyses a ribonucleoside 5'-diphosphate + ATP = a ribonucleoside 5'-triphosphate + ADP. Functionally, major role in the synthesis of nucleoside triphosphates other than ATP. The ATP gamma phosphate is transferred to the NDP beta phosphate via a ping-pong mechanism, using a phosphorylated active-site intermediate. This is Nucleoside diphosphate kinase from Desulforamulus reducens (strain ATCC BAA-1160 / DSM 100696 / MI-1) (Desulfotomaculum reducens).